A 238-amino-acid polypeptide reads, in one-letter code: Chromosome partition protein MukE (238 aa).

The tract at residues 206 to 238 is disordered; that stretch reads EESSQSSFDLDENEKLSDISAEEQHELELEGDA. A compositionally biased stretch (basic and acidic residues) spans 218–238; that stretch reads NEKLSDISAEEQHELELEGDA.

It belongs to the MukE family. As to quaternary structure, interacts, and probably forms a ternary complex, with MukF and MukB. The complex formation is stimulated by calcium or magnesium.

Its subcellular location is the cytoplasm. It localises to the nucleoid. Its function is as follows. Involved in chromosome condensation, segregation and cell cycle progression. May participate in facilitating chromosome segregation by condensation DNA from both sides of a centrally located replisome during cell division. Probably acts via its interaction with MukB and MukF. The protein is Chromosome partition protein MukE of Aliivibrio salmonicida (strain LFI1238) (Vibrio salmonicida (strain LFI1238)).